The chain runs to 250 residues: Geranylgeranylglyceryl phosphate synthase (250 aa).

Residues Asp-26 and Ser-55 each coordinate Mg(2+). Sn-glycerol 1-phosphate contacts are provided by residues 174-180 (YLEAGSG), 205-206 (GG), and 227-228 (GT).

It belongs to the GGGP/HepGP synthase family. Group II subfamily. Mg(2+) serves as cofactor.

The protein localises to the cytoplasm. It carries out the reaction sn-glycerol 1-phosphate + (2E,6E,10E)-geranylgeranyl diphosphate = sn-3-O-(geranylgeranyl)glycerol 1-phosphate + diphosphate. The protein operates within membrane lipid metabolism; glycerophospholipid metabolism. In terms of biological role, prenyltransferase that catalyzes the transfer of the geranylgeranyl moiety of geranylgeranyl diphosphate (GGPP) to the C3 hydroxyl of sn-glycerol-1-phosphate (G1P). This reaction is the first ether-bond-formation step in the biosynthesis of archaeal membrane lipids. The polypeptide is Geranylgeranylglyceryl phosphate synthase (Nitrosopumilus maritimus (strain SCM1)).